The following is a 326-amino-acid chain: DNA-directed RNA polymerase subunit alpha (326 aa).

An alpha N-terminal domain (alpha-NTD) region spans residues 1–231 (MQSNSLLKPR…DQLSVFADLE (231 aa)). Positions 245-326 (IDPVLLRPVD…WPPAGLEKLG (82 aa)) are alpha C-terminal domain (alpha-CTD).

Belongs to the RNA polymerase alpha chain family. Homodimer. The RNAP catalytic core consists of 2 alpha, 1 beta, 1 beta' and 1 omega subunit. When a sigma factor is associated with the core the holoenzyme is formed, which can initiate transcription.

It catalyses the reaction RNA(n) + a ribonucleoside 5'-triphosphate = RNA(n+1) + diphosphate. DNA-dependent RNA polymerase catalyzes the transcription of DNA into RNA using the four ribonucleoside triphosphates as substrates. The chain is DNA-directed RNA polymerase subunit alpha from Aromatoleum aromaticum (strain DSM 19018 / LMG 30748 / EbN1) (Azoarcus sp. (strain EbN1)).